Reading from the N-terminus, the 192-residue chain is Xanthine phosphoribosyltransferase (192 aa).

The xanthine site is built by Leu20 and Asn27. 128–132 contributes to the 5-phospho-alpha-D-ribose 1-diphosphate binding site; sequence ANGDA. A xanthine-binding site is contributed by Lys156.

This sequence belongs to the purine/pyrimidine phosphoribosyltransferase family. Xpt subfamily. As to quaternary structure, homodimer.

It is found in the cytoplasm. It catalyses the reaction XMP + diphosphate = xanthine + 5-phospho-alpha-D-ribose 1-diphosphate. It participates in purine metabolism; XMP biosynthesis via salvage pathway; XMP from xanthine: step 1/1. Converts the preformed base xanthine, a product of nucleic acid breakdown, to xanthosine 5'-monophosphate (XMP), so it can be reused for RNA or DNA synthesis. In Staphylococcus aureus (strain bovine RF122 / ET3-1), this protein is Xanthine phosphoribosyltransferase.